An 805-amino-acid polypeptide reads, in one-letter code: Acetyl-CoA decarbonylase/synthase complex subunit alpha 3 (805 aa).

The [4Fe-4S] cluster site is built by cysteine 72, cysteine 75, cysteine 76, cysteine 78, cysteine 83, and cysteine 93. Position 116 (histidine 116) interacts with CO. [Ni-4Fe-4S] cluster contacts are provided by histidine 249, cysteine 277, and cysteine 322. 2 4Fe-4S ferredoxin-type domains span residues 407-435 (EEFKVYIDKCVKCGECMLACPEELDIPEA) and 445-474 (EYLEALHDVCIGCRRCEQVCKKEIPILNVL). The [4Fe-4S] cluster site is built by cysteine 416, cysteine 419, cysteine 422, cysteine 426, cysteine 454, cysteine 457, cysteine 460, and cysteine 464. [Ni-4Fe-4S] cluster contacts are provided by cysteine 522, cysteine 551, and cysteine 586.

This sequence belongs to the Ni-containing carbon monoxide dehydrogenase family. In terms of assembly, heterotetramer of two alpha and two epsilon subunits. The ACDS complex is made up of alpha, epsilon, beta, gamma and delta subunits with a probable stoichiometry of (alpha(2)epsilon(2))(4)-beta(8)-(gamma(1)delta(1))(8). The cofactor is [4Fe-4S] cluster. Requires [Ni-4Fe-4S] cluster as cofactor.

It catalyses the reaction CO + 2 oxidized [2Fe-2S]-[ferredoxin] + H2O = 2 reduced [2Fe-2S]-[ferredoxin] + CO2 + 2 H(+). It functions in the pathway one-carbon metabolism; methanogenesis from acetate. In terms of biological role, part of the ACDS complex that catalyzes the reversible cleavage of acetyl-CoA, allowing growth on acetate as sole source of carbon and energy. The alpha-epsilon subcomponent functions as a carbon monoxide dehydrogenase. The chain is Acetyl-CoA decarbonylase/synthase complex subunit alpha 3 from Methanosarcina acetivorans (strain ATCC 35395 / DSM 2834 / JCM 12185 / C2A).